Consider the following 400-residue polypeptide: Subtilisin-like protease 11 (400 aa).

An N-terminal signal peptide occupies residues 1–19; the sequence is MGLFKVIFTAVAALSAVDA. Residues 20-117 constitute a propeptide that is removed on maturation; it reads AELLSSAKSK…VEHDRHVYIS (98 aa). One can recognise an Inhibitor I9 domain in the interval 35–116; the sequence is SYLVVMKDSV…FVEHDRHVYI (82 aa). Residues 127–400 form the Peptidase S8 domain; it reads SWGLGRVSHR…NKLLYNRSGK (274 aa). Residue Asn138 is glycosylated (N-linked (GlcNAc...) asparagine). The active-site Charge relay system is Asp159. A glycan (N-linked (GlcNAc...) asparagine) is linked at Asn181. His191 functions as the Charge relay system in the catalytic mechanism. 2 N-linked (GlcNAc...) asparagine glycosylation sites follow: Asn252 and Asn337. Ser346 serves as the catalytic Charge relay system. 2 N-linked (GlcNAc...) asparagine glycosylation sites follow: Asn388 and Asn396.

Belongs to the peptidase S8 family.

The protein resides in the secreted. Secreted subtilisin-like serine protease with keratinolytic activity that contributes to pathogenicity. The protein is Subtilisin-like protease 11 (SUB11) of Trichophyton verrucosum (strain HKI 0517).